The chain runs to 463 residues: Histone acetyltransferase mst1 (463 aa).

The region spanning 22–74 is the Tudor-knot domain; that stretch reads VYKSKVFAFKDGEYRKAEILMIQKRTRGVVYYVHYNDYNKRLDEWITIDNIDL. The segment at 76-145 is disordered; that stretch reads KGIEYPPPEK…GSNAGNESLP (70 aa). The segment covering 87-99 has biased composition (basic residues); it reads KKAHGKGKSSKRP. A compositionally biased stretch (low complexity) spans 111–121; it reads PSKTEPSTPST. The MYST-type HAT domain occupies 179-451; it reads ARIRNINKIC…NGDLLADWQP (273 aa). The segment at 212–237 adopts a C2HC MYST-type zinc-finger fold; it reads VYICSFCFCYYGSERQFQRHREKCTL. An ESA1-RPD3 motif motif is present at residues 262 to 283; that stretch reads RTWCRNICLLSKLFLDHKMLYY. Lysine 279 carries the post-translational modification N6-acetyllysine; by autocatalysis. Acetyl-CoA-binding positions include 320 to 324 and 329 to 335; these read ACILT and QRHGYGK. Glutamate 355 (proton donor/acceptor) is an active-site residue. Serine 359 is a binding site for acetyl-CoA.

It belongs to the MYST (SAS/MOZ) family. Component of the NuA4 histone acetyltransferase complex. Interacts with arp4. Post-translationally, autoacetylation at Lys-279 is required for proper function.

It is found in the nucleus. The protein localises to the chromosome. It carries out the reaction L-lysyl-[histone] + acetyl-CoA = N(6)-acetyl-L-lysyl-[histone] + CoA + H(+). It catalyses the reaction L-lysyl-[protein] + acetyl-CoA = N(6)-acetyl-L-lysyl-[protein] + CoA + H(+). The enzyme catalyses 2-hydroxyisobutanoyl-CoA + L-lysyl-[protein] = N(6)-(2-hydroxyisobutanoyl)-L-lysyl-[protein] + CoA + H(+). The catalysed reaction is (2E)-butenoyl-CoA + L-lysyl-[protein] = N(6)-(2E)-butenoyl-L-lysyl-[protein] + CoA + H(+). Its function is as follows. Catalytic component of the NuA4 histone acetyltransferase (HAT) complex which is involved in epigenetic transcriptional activation of selected genes principally by acetylation of nucleosomal histones H4, H3, H2B, H2A and H2A variant H2A.Z. Acetylates histone H4 to form H4K5ac, H4K8ac, H4K12ac and H4K16ac, histone H3 to form H3K14ac, and histone H2A to form H2AK4ac and H2AK7ac. The NuA4 complex is involved in the DNA damage response and is required for chromosome segregation. The NuA4 complex plays a direct role in repair of DNA double-strand breaks (DSBs) through homologous recombination. Recruitment to promoters depends on H3K4me. Also acetylates non-histone proteins. In addition to protein acetyltransferase, can use different acyl-CoA substrates, such as 2-hydroxyisobutanoyl-CoA (2-hydroxyisobutyryl-CoA) or (2E)-butenoyl-CoA (crotonyl-CoA), and is able to mediate protein 2-hydroxyisobutyrylation and crotonylation, respectively. In Schizosaccharomyces pombe (strain 972 / ATCC 24843) (Fission yeast), this protein is Histone acetyltransferase mst1.